The following is a 219-amino-acid chain: Thiopurine S-methyltransferase (219 aa).

Trp10, Leu45, Glu66, and Arg123 together coordinate S-adenosyl-L-methionine.

It belongs to the class I-like SAM-binding methyltransferase superfamily. TPMT family.

The protein localises to the cytoplasm. It catalyses the reaction S-adenosyl-L-methionine + a thiopurine = S-adenosyl-L-homocysteine + a thiopurine S-methylether.. This Bordetella bronchiseptica (strain ATCC BAA-588 / NCTC 13252 / RB50) (Alcaligenes bronchisepticus) protein is Thiopurine S-methyltransferase.